The chain runs to 157 residues: Phosphomannomutase (157 aa).

The active-site Phosphoserine intermediate is the Ser-98. Position 98 (Ser-98) interacts with Mg(2+).

This sequence belongs to the phosphohexose mutase family. The cofactor is Mg(2+).

It carries out the reaction alpha-D-mannose 1-phosphate = D-mannose 6-phosphate. It participates in nucleotide-sugar biosynthesis; GDP-alpha-D-mannose biosynthesis; alpha-D-mannose 1-phosphate from D-fructose 6-phosphate: step 2/2. Its pathway is capsule biogenesis; capsule polysaccharide biosynthesis. Involved in the biosynthesis of the K2 capsular polysaccharide biosynthesis. The sequence is that of Phosphomannomutase (manB) from Klebsiella pneumoniae.